The primary structure comprises 312 residues: Pre-mRNA-splicing factor 38A (312 aa).

The N-terminal protein interaction domain stretch occupies residues 1–179; that stretch reads MANRTVKDAH…VLEEAEQLEP (179 aa). 5 positions are modified to phosphoserine: Ser11, Ser193, Ser194, Ser209, and Ser226. The stretch at 170–204 forms a coiled coil; it reads VLEEAEQLEPRVSALEEDMDDVESSEEEEEEDEKL. The disordered stretch occupies residues 181 to 312; it reads VSALEEDMDD…SHKKSRRGNE (132 aa). Over residues 184–202 the composition is skewed to acidic residues; the sequence is LEEDMDDVESSEEEEEEDE. A compositionally biased stretch (basic and acidic residues) spans 203–224; it reads KLERVPSPDHRRRSYRDLDKPR. 2 stretches are compositionally biased toward basic residues: residues 225–294 and 301–312; these read RSPT…RSHS and KKSHKKSRRGNE.

It belongs to the PRP38 family. As to quaternary structure, component of the spliceosome B complex. Interacts (via N-terminal interaction domain) with ZMAT2 and MFAP1.

It is found in the nucleus. Involved in pre-mRNA splicing as a component of the spliceosome. This Bos taurus (Bovine) protein is Pre-mRNA-splicing factor 38A (PRPF38A).